The sequence spans 412 residues: NFATC2-interacting protein (412 aa).

A disordered region spans residues 1–38; it reads MAEPLRGRGPRSRGGRGARRARGARGRCPRARQSPARL. Positions 8-30 are enriched in basic residues; the sequence is RGPRSRGGRGARRARGARGRCPR. Phosphoserine is present on residues serine 49, serine 51, serine 79, serine 81, and serine 83. Residues 58 to 115 form a disordered region; that stretch reads VADPVEVPVARLPAPAKPEQDSDSDSEGAAEGPAGAPRTLVRRRRRRLLDPGEAPVVP. Low complexity predominate over residues 86-96; that stretch reads AAEGPAGAPRT. Residue serine 118 is modified to Phosphoserine. Lysine 120 is covalently cross-linked (Glycyl lysine isopeptide (Lys-Gly) (interchain with G-Cter in SUMO2)). The disordered stretch occupies residues 136 to 206; it reads KLCPSEPEDE…SSRNKSRKHT (71 aa). A coiled-coil region spans residues 168–227; sequence RKKLRKKCEKEEKKMEEFPDQDISPLPQPSSRNKSRKHTEALQKLREVNKRLQDLRSCLS. Positions 175–184 are enriched in basic and acidic residues; it reads CEKEEKKMEE. Residues serine 191, serine 197, and serine 307 each carry the phosphoserine modification. 2 positions are modified to phosphothreonine: threonine 309 and threonine 311. A Ubiquitin-like domain is found at 341 to 412; the sequence is LRLRVQGKEK…ESGDLIEVWG (72 aa). Phosphoserine is present on residues serine 362 and serine 383.

As to quaternary structure, interacts with NFATC2, TRAF1, TRAF2 and PRMT1. Interacts with UBE2I/UBC9. Post-translationally, methylation at the N-terminus by PRMT1 modulates interaction with the NFAT complex and results in augmented cytokine production. In terms of tissue distribution, highest level detected in spleen, thymus and testis.

It localises to the nucleus. The protein localises to the cytoplasm. In T-helper 2 (Th2) cells, regulates the magnitude of NFAT-driven transcription of a specific subset of cytokine genes, including IL3, IL4, IL5 and IL13, but not IL2. Recruits PRMT1 to the IL4 promoter; this leads to enhancement of histone H4 'Arg-3'-methylation and facilitates subsequent histone acetylation at the IL4 locus, thus promotes robust cytokine expression. Down-regulates formation of poly-SUMO chains by UBE2I/UBC9. The protein is NFATC2-interacting protein (Nfatc2ip) of Mus musculus (Mouse).